The chain runs to 834 residues: Enhancer of filamentation 1 (834 aa).

Residues 1–505 (MKYKNLMARA…HQILSQTSHD (505 aa)) are required for interaction with ITCH. The region spanning 3 to 65 (YKNLMARALY…PGNRVKLLIG (63 aa)) is the SH3 domain. Residues tyrosine 92, tyrosine 164, tyrosine 166, tyrosine 177, tyrosine 189, tyrosine 214, and tyrosine 223 each carry the phosphotyrosine; by ABL1 modification. An interacts strongly with spindle-regulatory protein D1M1 region spans residues 102–229 (RDTIYQVPPS…KGVYAIPPSA (128 aa)). Positions 238-260 (EKDYDFPPPMRQAGRPDLRPEGV) are disordered. Tyrosine 279 is subject to Phosphotyrosine; by ABL1. The interval 291–316 (ARRHQSLSPNHPPPQLGQSVGSQNDA) is disordered. Serine 296 carries the post-translational modification Phosphoserine. Residues 306-315 (LGQSVGSQND) are compositionally biased toward polar residues. Phosphotyrosine; by ABL1 is present on tyrosine 317. Disordered regions lie at residues 328-398 (PPAE…SPAQ) and 560-623 (GPGS…GSER). Residues 332 to 344 (TSEKANPQERDGV) are compositionally biased toward basic and acidic residues. The segment at 351-834 (NPPDAKGSRD…KRSLLEMATF (484 aa)) is interacts with CTTN. Residues 360–363 (DLVD) carry the Caspase cleavage related site motif. The residue at position 369 (serine 369) is a Phosphoserine. Over residues 369-395 (SFSSTGSTRSNMSTSSTSSKESSLSAS) the composition is skewed to low complexity. The segment at 710–760 (FYYDQCETHFISLLNAIDALFSCVSSAQPPRIFVAHSKFVILSAHKLVFIG) is divergent helix-loop-helix motif. Residues 710–834 (FYYDQCETHF…KRSLLEMATF (125 aa)) are required for interaction with PLK1. Phosphoserine; by CSNK1D and CSNK1E is present on serine 780. Threonine 804 bears the Phosphothreonine; by CSNK1E mark.

This sequence belongs to the CAS family. As to quaternary structure, homodimer. Forms heterodimers with BCAR1/p130cas. Forms complexes with PTK2B/RAFTK, adapter protein CRKL and LYN kinase. Part of a complex composed of NEDD9, AURKA and CTTN; within the complex NEDD9 acts as a scaffold protein and is required for complex formation. Part of a ternary complex composed of SMAD3, ITCH/AIP4 and NEDD9/HEF1; within the complex NEDD9/HEF1 interacts (via N-terminus) with ITCH/AIP4 (via WW domains); the complex mediates ubiquitination and proteasomal degradation of NEDD9/HEF1. Interacts with SMAD3; the interaction promotes NEDD9 ubiquitination and proteasomal degradation. Interacts with ID2. Interacts with CTTN (via N-terminus). Interacts with MICAL. Interacts with TXNL4/DIM1. Interacts with BCAR3 (via Ras-GEF domain). Interacts with SH2D3C isoform 1 and isoform 2. Interacts with ECT2. Interacts with PTPN11/SHP-2 (via SH2 domains); the interaction is enhanced when NEDD9/CAS-L is tyrosine phosphorylated. Interacts (via C-terminus) with PLK1 (via polo box domains). Interacts with NKX2-5. Interacts with SMAD3; the interaction is inhibited by oxidation of NEDD9. Interacts with NEDD9/HEF1; interaction is induced by CXCL12 promotion of ABL-mediated phosphorylation of NEDD9/HEF1. Interacts (via SH3 domain) with PTK2/FAK. Interacts with FYN; in the presence of PTK2. Interacts with INPPL1/SHIP2. In terms of processing, cell cycle-regulated processing produces four isoforms: p115, p105, p65, and p55. Isoform p115 arises from p105 phosphorylation and appears later in the cell cycle. Isoform p55 arises from p105 as a result of cleavage at a caspase cleavage-related site and it appears specifically at mitosis. The p65 isoform is poorly detected. Post-translationally, polyubiquitinated by ITCH/AIP4, leading to proteasomal degradation. PTK2/FAK1 phosphorylates the protein at the YDYVHL motif (conserved among all cas proteins) following integrin stimulation. The SRC family kinases (FYN, SRC, LCK and CRK) are recruited to the phosphorylated sites and can phosphorylate other tyrosine residues. Ligation of either integrin beta-1 or B-cell antigen receptor on tonsillar B-cells and B-cell lines promotes tyrosine phosphorylation and both integrin and BCR-mediated tyrosine phosphorylation requires an intact actin network. Phosphorylation is required to recruit NEDD9 to T-cell receptor microclusters at the periphery of newly formed immunological synapses. In fibroblasts transformation with oncogene v-ABL results in an increase in tyrosine phosphorylation. Transiently phosphorylated following CD3 cross-linking and this phosphorylated form binds to CRKL and C3G. A mutant lacking the SH3 domain is phosphorylated upon CD3 cross-linking but not upon integrin beta-1 cross-linking. Tyrosine phosphorylation occurs upon stimulation of the G-protein coupled C1a calcitonin receptor. Calcitonin-stimulated tyrosine phosphorylation is mediated by calcium- and protein kinase C-dependent mechanisms and requires the integrity of the actin cytoskeleton. Phosphorylation at Ser-369 induces proteasomal degradation. Phosphorylated by LYN. Phosphorylation at Ser-780 by CSNK1D or CSNK1E, or phosphorylation of Thr-804 by CSNK1E enhances the interaction of NEDD9 with PLK1. Expressed in B-cells (at protein level). Expressed in the respiratory epithelium of the main bronchi to the bronchioles in the lungs (at protein level). High levels detected in kidney, lung, and placenta. Expressed in lymphocytes.

It is found in the cytoplasm. Its subcellular location is the cell cortex. The protein localises to the nucleus. The protein resides in the golgi apparatus. It localises to the cell projection. It is found in the lamellipodium. Its subcellular location is the cell junction. The protein localises to the focal adhesion. The protein resides in the cytoskeleton. It localises to the spindle pole. It is found in the cilium. Its subcellular location is the cilium basal body. The protein localises to the basolateral cell membrane. The protein resides in the spindle. Scaffolding protein which plays a central coordinating role for tyrosine-kinase-based signaling related to cell adhesion. As a focal adhesion protein, plays a role in embryonic fibroblast migration. May play an important role in integrin beta-1 or B cell antigen receptor (BCR) mediated signaling in B- and T-cells. Integrin beta-1 stimulation leads to recruitment of various proteins including CRKL and SHPTP2 to the tyrosine phosphorylated form. Promotes adhesion and migration of lymphocytes; as a result required for the correct migration of lymphocytes to the spleen and other secondary lymphoid organs. Plays a role in the organization of T-cell F-actin cortical cytoskeleton and the centralization of T-cell receptor microclusters at the immunological synapse. Negatively regulates cilia outgrowth in polarized cysts. Modulates cilia disassembly via activation of AURKA-mediated phosphorylation of HDAC6 and subsequent deacetylation of alpha-tubulin. Positively regulates RANKL-induced osteoclastogenesis. Required for the maintenance of hippocampal dendritic spines in the dentate gyrus and CA1 regions, thereby involved in spatial learning and memory. This is Enhancer of filamentation 1 from Homo sapiens (Human).